The following is a 346-amino-acid chain: MALLKVKFDQKKRVKLAQGLWLMNWLSVLAGIVLFSLGLFLKIELRKRSEVMNNSESHFVPNSLIGVGVLSCVFNSLAGKICYDALDPAKYAKWKPWLKPYLAVCIFFNVILFLVALCCFLLRGSLESTLAYGLKNGMKYYRDTDTPGRCFMKKTIDMLQIEFKCCGNNGFRDWFEIQWISNRYLDFSSKEVKDRIKSNVDGRYLVDGVPFSCCNPSSPRPCIQYQLTNNSAHYSYDHQTEELNLWLRGCRAALLNYYSSLMNSMGVVTLLVWLFEVSITAGLRYLHTALESVSNPEDPECESEGWLLEKSVPETWKAFLESFKKLGKSNQVEAEGADAGPAPEAG.

The Cytoplasmic portion of the chain corresponds to 1–24 (MALLKVKFDQKKRVKLAQGLWLMN). Residues 25-43 (WLSVLAGIVLFSLGLFLKI) form a helical membrane-spanning segment. The Lumenal segment spans residues 44–61 (ELRKRSEVMNNSESHFVP). A glycan (N-linked (GlcNAc...) asparagine) is linked at N53. A helical membrane pass occupies residues 62 to 80 (NSLIGVGVLSCVFNSLAGK). The Cytoplasmic segment spans residues 81–99 (ICYDALDPAKYAKWKPWLK). The chain crosses the membrane as a helical span at residues 100–123 (PYLAVCIFFNVILFLVALCCFLLR). Topologically, residues 124 to 264 (GSLESTLAYG…LNYYSSLMNS (141 aa)) are lumenal. N229 carries an N-linked (GlcNAc...) asparagine glycan. A helical membrane pass occupies residues 265–290 (MGVVTLLVWLFEVSITAGLRYLHTAL). The Cytoplasmic segment spans residues 291 to 346 (ESVSNPEDPECESEGWLLEKSVPETWKAFLESFKKLGKSNQVEAEGADAGPAPEAG). The segment at 341 to 346 (PAPEAG) is interaction with MREG.

The protein belongs to the PRPH2/ROM1 family. As to quaternary structure, homodimer; disulfide-linked. Forms a homotetramer. Forms a heterotetramer with ROM1. Homotetramer and heterotetramer core complexes go on to form higher order complexes by formation of intermolecular disulfide bonds. Interacts with MREG. Interacts with STX3 isoform 3B. Interacts with SNAP25. In terms of tissue distribution, expressed in the retina (at protein level).

Its subcellular location is the membrane. The protein localises to the cell projection. It is found in the cilium. It localises to the photoreceptor outer segment. The protein resides in the photoreceptor inner segment. In terms of biological role, essential for retina photoreceptor outer segment disk morphogenesis, may also play a role with ROM1 in the maintenance of outer segment disk structure. Required for the maintenance of retinal outer nuclear layer thickness. Required for the correct development and organization of the photoreceptor inner segment. In Mus musculus (Mouse), this protein is Peripherin-2 (Prph2).